The primary structure comprises 104 residues: Large ribosomal subunit protein uL24 (104 aa).

This sequence belongs to the universal ribosomal protein uL24 family. Part of the 50S ribosomal subunit.

In terms of biological role, one of two assembly initiator proteins, it binds directly to the 5'-end of the 23S rRNA, where it nucleates assembly of the 50S subunit. Functionally, one of the proteins that surrounds the polypeptide exit tunnel on the outside of the subunit. The polypeptide is Large ribosomal subunit protein uL24 (Ectopseudomonas mendocina (strain ymp) (Pseudomonas mendocina)).